Here is a 93-residue protein sequence, read N- to C-terminus: DNA-directed RNA polymerase subunit omega (93 aa).

This sequence belongs to the RNA polymerase subunit omega family. In terms of assembly, the RNAP catalytic core consists of 2 alpha, 1 beta, 1 beta' and 1 omega subunit. When a sigma factor is associated with the core the holoenzyme is formed, which can initiate transcription.

It catalyses the reaction RNA(n) + a ribonucleoside 5'-triphosphate = RNA(n+1) + diphosphate. Its function is as follows. Promotes RNA polymerase assembly. Latches the N- and C-terminal regions of the beta' subunit thereby facilitating its interaction with the beta and alpha subunits. This Shewanella loihica (strain ATCC BAA-1088 / PV-4) protein is DNA-directed RNA polymerase subunit omega.